We begin with the raw amino-acid sequence, 91 residues long: Small ribosomal subunit protein uS19 (91 aa).

Belongs to the universal ribosomal protein uS19 family.

Functionally, protein S19 forms a complex with S13 that binds strongly to the 16S ribosomal RNA. This chain is Small ribosomal subunit protein uS19, found in Syntrophotalea carbinolica (strain DSM 2380 / NBRC 103641 / GraBd1) (Pelobacter carbinolicus).